We begin with the raw amino-acid sequence, 177 residues long: Thymidine kinase (177 aa).

An ATP-binding site is contributed by 11 to 18 (GPMFSGKS). Glu83 acts as the Proton acceptor in catalysis. Phe113 lines the substrate pocket. The Zn(2+) site is built by Cys138 and Cys141. Substrate is bound at residue 157–161 (IEIIG). The Zn(2+) site is built by Cys170 and Cys173.

Belongs to the thymidine kinase family. As to quaternary structure, homotetramer. Two molecules of substrate bind to each enzyme tetramer.

It catalyses the reaction thymidine + ATP = dTMP + ADP + H(+). In terms of biological role, phosphorylates thymidine and thymidine analogs, such as azidothymidine (AZT). Part of the salvage pathway for pyrimidine deoxyribonucleotide synthesis. This chain is Thymidine kinase (OPG101), found in Vaccinia virus (strain Copenhagen) (VACV).